The following is a 400-amino-acid chain: Vitamin K-dependent protein Z (400 aa).

Residues 1 to 23 (MAGCVPLLQGLVLVLALHRVEPS) form the signal peptide. Positions 24–40 (VFLPASKANDVLVRWKR) are excised as a propeptide. Residues 41–86 (AGSYLLEELFEGNLEKECYEEICVYEEAREVFENEVVTDEFWRRYK) enclose the Gla domain. 13 positions are modified to 4-carboxyglutamate: Glu47, Glu48, Glu51, Glu55, Glu57, Glu60, Glu61, Glu66, Glu67, Glu70, Glu73, Glu75, and Glu80. Cysteines 58 and 63 form a disulfide. EGF-like domains follow at residues 87–123 (GGSP…SNCE) and 125–166 (AKNE…KQCV). 7 disulfides stabilise this stretch: Cys91/Cys102, Cys96/Cys111, Cys113/Cys122, Cys129/Cys141, Cys137/Cys150, Cys152/Cys165, and Cys203/Cys219. The O-linked (Glc...) serine glycan is linked to Ser93. Asn99 carries an N-linked (GlcNAc...) asparagine glycan. Asp104 is subject to (3R)-3-hydroxyaspartate. Positions 175–400 (VLTSEKRAPD…YSLWFKQIMN (226 aa)) constitute a Peptidase S1 domain. 4 N-linked (GlcNAc...) asparagine glycosylation sites follow: Asn225, Asn233, Asn306, and Asn332. A disulfide bridge links Cys327 with Cys341.

It belongs to the peptidase S1 family. In terms of assembly, interacts with SERPINA10. In terms of processing, the iron and 2-oxoglutarate dependent 3-hydroxylation of aspartate and asparagine is (R) stereospecific within EGF domains. Plasma.

It localises to the secreted. In terms of biological role, appears to assist hemostasis by binding thrombin and promoting its association with phospholipid vesicles. Inhibits activity of the coagulation protease factor Xa in the presence of SERPINA10, calcium and phospholipids. This chain is Vitamin K-dependent protein Z (PROZ), found in Homo sapiens (Human).